The primary structure comprises 175 residues: Transcription factor E (175 aa).

The HTH TFE/IIEalpha-type domain occupies 4-88 (AEDLFINLAK…YWKPNIDQIN (85 aa)).

The protein belongs to the TFE family. In terms of assembly, monomer. Interaction with RNA polymerase subunits RpoF and RpoE is necessary for Tfe stimulatory transcription activity. Able to interact with Tbp and RNA polymerase in the absence of DNA promoter. Interacts both with the preinitiation and elongation complexes.

Its function is as follows. Transcription factor that plays a role in the activation of archaeal genes transcribed by RNA polymerase. Facilitates transcription initiation by enhancing TATA-box recognition by TATA-box-binding protein (Tbp), and transcription factor B (Tfb) and RNA polymerase recruitment. Not absolutely required for transcription in vitro, but particularly important in cases where Tbp or Tfb function is not optimal. It dynamically alters the nucleic acid-binding properties of RNA polymerases by stabilizing the initiation complex and destabilizing elongation complexes. Seems to translocate with the RNA polymerase following initiation and acts by binding to the non template strand of the transcription bubble in elongation complexes. The polypeptide is Transcription factor E (Saccharolobus islandicus (strain Y.N.15.51 / Yellowstone #2) (Sulfolobus islandicus)).